The chain runs to 83 residues: Bublin coiled-coil protein (83 aa).

A disordered region spans residues 1 to 24 (MSGPNGDLGMPVEAGAEGEEDGFG). A coiled-coil region spans residues 25-74 (EAEYAAINSMLDQINSCLDHLEEKNDHLHARLQELLESNRQTRLEFQQQL). Ser82 carries the phosphoserine modification.

This sequence belongs to the UPF0184 (EST00098) family.

It is found in the cell junction. The protein localises to the cytoplasm. Its subcellular location is the cytoskeleton. In terms of biological role, essential for intermediate filament organization in intestinal cells, interacts with intermediate filament and regulates intestinal lumen morphology. The protein is Bublin coiled-coil protein of Homo sapiens (Human).